We begin with the raw amino-acid sequence, 348 residues long: Aspartate carbamoyltransferase catalytic subunit (348 aa).

The carbamoyl phosphate site is built by R59 and T60. K87 lines the L-aspartate pocket. Residues R109, H142, and Q145 each coordinate carbamoyl phosphate. Positions 182 and 253 each coordinate L-aspartate. Carbamoyl phosphate is bound by residues G294 and P295.

The protein belongs to the aspartate/ornithine carbamoyltransferase superfamily. ATCase family. As to quaternary structure, heterododecamer (2C3:3R2) of six catalytic PyrB chains organized as two trimers (C3), and six regulatory PyrI chains organized as three dimers (R2).

It carries out the reaction carbamoyl phosphate + L-aspartate = N-carbamoyl-L-aspartate + phosphate + H(+). The protein operates within pyrimidine metabolism; UMP biosynthesis via de novo pathway; (S)-dihydroorotate from bicarbonate: step 2/3. In terms of biological role, catalyzes the condensation of carbamoyl phosphate and aspartate to form carbamoyl aspartate and inorganic phosphate, the committed step in the de novo pyrimidine nucleotide biosynthesis pathway. In Prochlorococcus marinus (strain MIT 9303), this protein is Aspartate carbamoyltransferase catalytic subunit.